The following is a 475-amino-acid chain: Aminodeoxychorismate synthase component 1 (475 aa).

It belongs to the anthranilate synthase component I family. Monomer. Heterodimer consisting of two non-identical subunits: a glutamine amidotransferase subunit (PabA) and a aminodeoxychorismate synthase subunit (PabB). Mg(2+) is required as a cofactor.

It carries out the reaction chorismate + L-glutamine = 4-amino-4-deoxychorismate + L-glutamate. Its pathway is cofactor biosynthesis; tetrahydrofolate biosynthesis; 4-aminobenzoate from chorismate: step 1/2. Part of a heterodimeric complex that catalyzes the two-step biosynthesis of 4-amino-4-deoxychorismate (ADC), a precursor of p-aminobenzoate (PABA) and tetrahydrofolate. In the first step, a glutamine amidotransferase (PabA) generates ammonia as a substrate that, along with chorismate, is used in the second step, catalyzed by aminodeoxychorismate synthase (PabB) to produce ADC. In Streptomyces lividans, this protein is Aminodeoxychorismate synthase component 1 (pabB).